A 255-amino-acid chain; its full sequence is Triosephosphate isomerase (255 aa).

Residue 9–11 (NWK) participates in substrate binding. His-95 serves as the catalytic Electrophile. The active-site Proton acceptor is the Glu-167. Substrate-binding positions include Gly-173, Ser-212, and 233–234 (GG).

Belongs to the triosephosphate isomerase family. Homodimer.

Its subcellular location is the cytoplasm. The enzyme catalyses D-glyceraldehyde 3-phosphate = dihydroxyacetone phosphate. It functions in the pathway carbohydrate biosynthesis; gluconeogenesis. The protein operates within carbohydrate degradation; glycolysis; D-glyceraldehyde 3-phosphate from glycerone phosphate: step 1/1. Involved in the gluconeogenesis. Catalyzes stereospecifically the conversion of dihydroxyacetone phosphate (DHAP) to D-glyceraldehyde-3-phosphate (G3P). The sequence is that of Triosephosphate isomerase from Enterobacter cloacae.